The following is a 2028-amino-acid chain: Protein Daple (2028 aa).

Residues 11–131 (LFLQSPLVTW…KVLLLVLGCA (121 aa)) form the Calponin-homology (CH) domain. The interval 222–250 (AQHPPSPIKSSSADSTPSPTSSLSSEDKQ) is disordered. Residues serine 227 and serine 239 each carry the phosphoserine modification. Residues 229-245 (IKSSSADSTPSPTSSLS) show a composition bias toward low complexity. 4 coiled-coil regions span residues 247-428 (EDKQ…SMNE), 456-1017 (ELNE…QGEG), 1045-1094 (HKEA…SSQI), and 1139-1393 (LQNH…DQYK). Serine 486 carries the post-translational modification Phosphoserine. Residues 1011–1024 (RQNQGEGQHLQNSF) are compositionally biased toward polar residues. Residues 1011–1043 (RQNQGEGQHLQNSFKHPAGKTAASHQGKEAWGP) form a disordered region. A compositionally biased stretch (basic and acidic residues) spans 1419–1428 (KEGSRERLKS). Disordered stretches follow at residues 1419–1724 (KEGS…GAKM) and 1736–1803 (AAPT…SLSR). Low complexity-rich tracts occupy residues 1439–1450 (SSDPASPAASQP), 1517–1534 (SRTC…NSTP), and 1568–1588 (SRPS…PLNL). Serine 1444 carries the phosphoserine modification. Positions 1589-1604 (KGSSEQLHGRSESFSS) are enriched in polar residues. The residue at position 1601 (serine 1601) is a Phosphoserine. The GBA signature appears at 1661 to 1691 (CSASPSSEMVTLEEFLEESNRSSPTHDTPSC). Basic and acidic residues predominate over residues 1689–1704 (PSCRDDLLSDYFRKAS). The span at 1792-1803 (HAPASRSASLSR) shows a compositional bias: low complexity. Serine 1806 is modified (phosphoserine). The disordered stretch occupies residues 1816 to 2021 (SGPEACKQES…PEPGGDPQTV (206 aa)). Residues 1842-1855 (SHTLQSPAPPSSHS) are compositionally biased toward polar residues. Over residues 1879–1897 (RPLDTRRFSLAPPKEERLA) the composition is skewed to basic and acidic residues. Positions 1902-1924 (SATAPAIATAGAGAAAAGSGSNS) are enriched in low complexity. The residue at position 1954 (threonine 1954) is a Phosphothreonine. A PDZ-binding motif is present at residues 2025–2028 (YGCV). The interval 2026–2028 (GCV) is DVL1-binding.

It belongs to the CCDC88 family. Homooligomer. Interacts with DVL1 (via PDZ domain); dissociates following initiation of non-canonical Wnt signaling. Interacts (via C-terminus) with ligand-activated Wnt receptor FZD7; competes with DVL1 for binding to FZD7 and displaces DVL1 from ligand-activated FZD7. Interacts (via GBA motif) with guanine nucleotide-binding protein G(i) alpha subunits GNAI1, GNAI2 and GNAI3 (inactive GDP-bound form); interacts with higher affinity with GNAI1 and GNAI3 than with GNAI2 and interaction leads to G(i) alpha subunit activation. Does not interact with GNAO1.

Its subcellular location is the cytoplasm. The protein resides in the cell junction. Its function is as follows. Required for activation of guanine nucleotide-binding proteins (G-proteins) during non-canonical Wnt signaling. Binds to ligand-activated Wnt receptor FZD7, displacing DVL1 from the FZD7 receptor and leading to inhibition of canonical Wnt signaling. Acts as a non-receptor guanine nucleotide exchange factor by also binding to guanine nucleotide-binding protein G(i) alpha (Gi-alpha) subunits, leading to their activation. Binding to Gi-alpha subunits displaces the beta and gamma subunits from the heterotrimeric G-protein complex, triggering non-canonical Wnt responses such as activation of RAC1 and PI3K-AKT signaling. Promotes apical constriction of cells via ARHGEF18. The protein is Protein Daple (CCDC88C) of Homo sapiens (Human).